The sequence spans 540 residues: Collagen alpha-1(XXIII) chain (540 aa).

The span at 1–26 (MGPGERAGGGGDAGKGNAAGGGGGGR) shows a compositional bias: gly residues. The segment at 1 to 28 (MGPGERAGGGGDAGKGNAAGGGGGGRSA) is disordered. The Cytoplasmic portion of the chain corresponds to 1-34 (MGPGERAGGGGDAGKGNAAGGGGGGRSATTAGSR). A helical; Signal-anchor for type II membrane protein membrane pass occupies residues 35–56 (AVSALCLLLSVGSAAACLLLGV). Residues 57-540 (QAAALQGRVA…GLPVPGCWHK (484 aa)) lie on the Extracellular side of the membrane. Disordered stretches follow at residues 109–304 (AREA…GEQG) and 316–540 (LDAL…CWHK). Collagen-like domains follow at residues 124-243 (GRRG…PGKK), 251-305 (QPGP…EQGD), 321-380 (GPPG…MGLS), 412-460 (GPPG…GPPG), and 463-522 (GLPG…PGLD). Composition is skewed to low complexity over residues 140–156 (QSGRDGYPGPLGLDGKP) and 168–183 (PGDFGPRGDQGQDGAA). Residues 185-195 (PPGPPGPPGAR) show a composition bias toward pro residues. Residues 322 to 334 (PPGPQGPPGPPGI) show a composition bias toward pro residues. Residues 350 to 362 (DGEKGPKGQKGDP) are compositionally biased toward basic and acidic residues. Pro residues predominate over residues 411-422 (PGPPGPPGPPGP). Composition is skewed to basic and acidic residues over residues 435 to 444 (DGAKGEKGAS) and 486 to 503 (RGEKGDRSERGEKGERGV).

In terms of assembly, homotrimer. In terms of processing, undergoes proteolytic cleavage by furin protease to yield a 60 kDa soluble form that forms a homotrimer and exhibits a low affinity interaction with heparin.

The protein localises to the cell membrane. The sequence is that of Collagen alpha-1(XXIII) chain (COL23A1) from Homo sapiens (Human).